A 497-amino-acid chain; its full sequence is Serine/threonine protein phosphatase 2A 57 kDa regulatory subunit B' epsilon isoform (497 aa).

Residues 12 to 71 (KFNKSDQHHQDNNNNNNNTSTNTVVRGSRTTTPAPSSVSNGESQTTAQSPSQTPNHPMFT) are disordered. A compositionally biased stretch (low complexity) spans 23–34 (NNNNNNNTSTNT). Positions 35–71 (VVRGSRTTTPAPSSVSNGESQTTAQSPSQTPNHPMFT) are enriched in polar residues.

Belongs to the phosphatase 2A regulatory subunit B56 family. PP2A consists of a common heteromeric enzyme, composed of a catalytic subunit (subunits C), a constant regulatory subunit (subunit A), and a variety of regulatory subunits such as subunits B (the R2/B/PR55/B55, R3/B''/PR72/PR130/PR59 and R5/B'/B56 families). As to expression, expressed ubiquitously.

It localises to the cytoplasm. Its function is as follows. The B regulatory subunit may modulate substrate selectivity and catalytic activity, and may also direct the localization of the catalytic enzyme to a particular subcellular compartment. The polypeptide is Serine/threonine protein phosphatase 2A 57 kDa regulatory subunit B' epsilon isoform (B'EPSILON) (Arabidopsis thaliana (Mouse-ear cress)).